The chain runs to 261 residues: Phosphoinositide-3-kinase-interacting protein 1 (261 aa).

A signal peptide spans 1 to 21; it reads MLLAWVRTILVSNMLLAEAYG. Residues 22-166 lie on the Extracellular side of the membrane; that stretch reads SGGCFWDNGH…NSKEKKDLGT (145 aa). The Kringle domain occupies 24 to 101; sequence GCFWDNGHLY…EKRPCQDLRC (78 aa). Intrachain disulfides connect Cys-25-Cys-101, Cys-46-Cys-82, and Cys-70-Cys-96. Positions 90-101 are enriched in basic and acidic residues; that stretch reads APEKRPCQDLRC. The segment at 90 to 122 is disordered; that stretch reads APEKRPCQDLRCPDTTSQGLPTSATETEEAAEV. A helical transmembrane segment spans residues 167–187; that stretch reads LGYVLGITMMVIIVVIGAGIV. Residues 188 to 261 lie on the Cytoplasmic side of the membrane; that stretch reads LGYTYKRGKD…LMGQAGTPGA (74 aa).

It is found in the cell membrane. In terms of biological role, negative regulator of hepatic phosphatidylinositol 3-kinase (PI3K) activity. The sequence is that of Phosphoinositide-3-kinase-interacting protein 1 (PIK3IP1) from Bos taurus (Bovine).